Here is a 223-residue protein sequence, read N- to C-terminus: Translation initiation factor 6 (223 aa).

Belongs to the eIF-6 family.

Binds to the 50S ribosomal subunit and prevents its association with the 30S ribosomal subunit to form the 70S initiation complex. The chain is Translation initiation factor 6 from Sulfurisphaera tokodaii (strain DSM 16993 / JCM 10545 / NBRC 100140 / 7) (Sulfolobus tokodaii).